The chain runs to 529 residues: MLDSTPMLAFIIGLLLLALTMKRKEKKKTMLISPTRNLSLPPGPKSWPLIGNLPEILGRNKPVFRWIHSLMKELNTDIACIRLANTHVIPVTSPRIAREILKKQDSVFATRPLTMGTEYCSRGYLTVAVEPQGEQWKKMRRVVASHVTSKKSFQMMLQKRTEEADNLVRYINNRSVKNRGNAFVVIDLRLAVRQYSGNVARKMMFGIRHFGKGSEDGSGPGLEEIEHVESLFTVLTHLYAFALSDYVPWLRFLDLEGHEKVVSNAMRNVSKYNDPFVDERLMQWRNGKMKEPQDFLDMFIIAKDTDGKPTLSDEEIKAQVTELMLATVDNPSNAAEWGMAEMINEPSIMQKAVEEIDRVVGKDRLVIESDLPNLNYVKACVKEAFRLHPVAPFNLPHMSTTDTVVDGYFIPKGSHVLISRMGIGRNPSVWDKPHKFDPERHLSTNTCVDLNESDLNIISFSAGRRGCMGVDIGSAMTYMLLARLIQGFTWLPVPGKNKIDISESKNDLFMAKPLYAVATPRLAPHVYPT.

The chain crosses the membrane as a helical span at residues 1 to 21 (MLDSTPMLAFIIGLLLLALTM). Cys467 is a binding site for heme.

Belongs to the cytochrome P450 family. It depends on heme as a cofactor.

The protein resides in the endoplasmic reticulum membrane. The catalysed reaction is L-phenylalanine + 2 reduced [NADPH--hemoprotein reductase] + 2 O2 = (E)-phenylacetaldehyde oxime + 2 oxidized [NADPH--hemoprotein reductase] + CO2 + 3 H2O + 2 H(+). Its pathway is secondary metabolite biosynthesis; phenylglucosinolate biosynthesis. In terms of biological role, converts L-phenylalanine into phenylacetaldoxime, the precursor of benzylglucosinolate (glucotropeolin). The chain is Phenylalanine N-monooxygenase (CYP79A2) from Arabidopsis thaliana (Mouse-ear cress).